Here is a 1213-residue protein sequence, read N- to C-terminus: DNA-directed RNA polymerase subunit beta' (1213 aa).

Residues cysteine 60, cysteine 62, cysteine 75, and cysteine 78 each contribute to the Zn(2+) site. Residues aspartate 450, aspartate 452, and aspartate 454 each contribute to the Mg(2+) site. Positions 819, 893, 900, and 903 each coordinate Zn(2+).

This sequence belongs to the RNA polymerase beta' chain family. The RNAP catalytic core consists of 2 alpha, 1 beta, 1 beta' and 1 omega subunit. When a sigma factor is associated with the core the holoenzyme is formed, which can initiate transcription. Mg(2+) is required as a cofactor. The cofactor is Zn(2+).

It carries out the reaction RNA(n) + a ribonucleoside 5'-triphosphate = RNA(n+1) + diphosphate. Functionally, DNA-dependent RNA polymerase catalyzes the transcription of DNA into RNA using the four ribonucleoside triphosphates as substrates. The protein is DNA-directed RNA polymerase subunit beta' of Streptococcus pyogenes serotype M1.